A 324-amino-acid polypeptide reads, in one-letter code: NAD(P)H-dependent D-xylose reductase xyl1 (324 aa).

Catalysis depends on Y50, which acts as the Proton donor. A substrate-binding site is contributed by H112. Residues S168–N169, S217–E226, and K273–N283 each bind NAD(+).

It belongs to the aldo/keto reductase family.

The enzyme catalyses an alditol + NAD(+) = an aldose + NADH + H(+). It catalyses the reaction an alditol + NADP(+) = an aldose + NADPH + H(+). It carries out the reaction xylitol + NAD(+) = D-xylose + NADH + H(+). The catalysed reaction is xylitol + NADP(+) = D-xylose + NADPH + H(+). It participates in carbohydrate metabolism; D-xylose degradation. It functions in the pathway carbohydrate degradation; L-arabinose degradation via L-arabinitol; D-xylulose 5-phosphate from L-arabinose (fungal route): step 1/5. Its function is as follows. Catalyzes the initial reaction in the xylose utilization pathway by reducing D-xylose into xylitol. Xylose is a major component of hemicelluloses such as xylan. Most fungi utilize D-xylose via three enzymatic reactions, xylose reductase (XR), xylitol dehydrogenase (XDH), and xylulokinase, to form xylulose 5-phosphate, which enters pentose phosphate pathway. Also major aldose reductase in pentose and D-galactose catabolism. Reduces the pentose L-arabinose and the hexose D-galactose to their respective polyols. Responsible for extracellular beta-galactosidase formation and cellulase induction during growth on lactose. In Hypocrea jecorina (Trichoderma reesei), this protein is NAD(P)H-dependent D-xylose reductase xyl1 (xyl1).